Reading from the N-terminus, the 384-residue chain is MSSVPAPREYFLDSIRAWLMLLGIPFHISLIYSTHSWHVNSAAPSWWLTLFNDFIHAFRMQVFFVISGYFSYMLFLRYPLKRWWKVRVERVGIPMLTAIPLLTLPQFILLQYVKEKTENWPTLSAYEKYNTLAWELISHLWFLLVLVILTTVSIGIFTWFQKRQETSKPRPAAISLAKLSLIFFLLGIAYAAIRRIIFIVYPAILSDGMFNFIVMQTLFYVPFFILGALAFIHPDLKARFTTPSRGCTLGAAVAFIAYLLNQRYGSGDAWMYETESVITMVMGLWMVNVVFSLGHRLLNFQSARVTYFVNASLFIYLVHHPLTLFFGAYITPHITSNLIGFLCGLIFVMGIALILYEIHLRIPLLKFLFSGKPPVKQESRAAIG.

10 helical membrane passes run 17–37 (AWLM…THSW), 54–74 (FIHA…SYML), 91–111 (VGIP…ILLQ), 140–160 (LWFL…FTWF), 173–193 (AISL…YAAI), 212–232 (FIVM…LAFI), 240–260 (FTTP…AYLL), 274–294 (TESV…FSLG), 311–331 (ASLF…AYIT), and 338–358 (LIGF…LYEI).

This sequence belongs to the acyltransferase 3 family. OpgC subfamily.

It localises to the cell membrane. It participates in glycan metabolism; osmoregulated periplasmic glucan (OPG) biosynthesis. In terms of biological role, necessary for the succinyl substitution of periplasmic glucans. Could catalyze the transfer of succinyl residues from the cytoplasmic side of the membrane to the nascent glucan backbones on the periplasmic side of the membrane. This is Glucans biosynthesis protein C from Salmonella schwarzengrund (strain CVM19633).